A 232-amino-acid polypeptide reads, in one-letter code: 7-cyano-7-deazaguanine synthase (232 aa).

8 to 18 is an ATP binding site; the sequence is FSGGQDSTTCL. Zn(2+)-binding residues include Cys189, Cys198, Cys201, and Cys204.

Belongs to the QueC family. The cofactor is Zn(2+).

It catalyses the reaction 7-carboxy-7-deazaguanine + NH4(+) + ATP = 7-cyano-7-deazaguanine + ADP + phosphate + H2O + H(+). It participates in purine metabolism; 7-cyano-7-deazaguanine biosynthesis. Functionally, catalyzes the ATP-dependent conversion of 7-carboxy-7-deazaguanine (CDG) to 7-cyano-7-deazaguanine (preQ(0)). The sequence is that of 7-cyano-7-deazaguanine synthase from Proteus mirabilis (strain HI4320).